A 390-amino-acid chain; its full sequence is S-adenosylmethionine synthase 3 (390 aa).

Glu9 lines the Mg(2+) pocket. His15 serves as a coordination point for ATP. Residue Glu43 coordinates K(+). 2 residues coordinate L-methionine: Glu56 and Gln99. ATP is bound by residues 167–169 (DGK), 235–238 (SGRF), Asp246, 252–253 (RK), Ala269, Lys273, and Lys277. Asp246 serves as a coordination point for L-methionine. Lys277 is an L-methionine binding site.

It belongs to the AdoMet synthase family. As to quaternary structure, homotetramer. Requires Mn(2+) as cofactor. Mg(2+) serves as cofactor. Co(2+) is required as a cofactor. The cofactor is K(+). As to expression, mostly expressed in stems and leaves.

The protein localises to the cytoplasm. The enzyme catalyses L-methionine + ATP + H2O = S-adenosyl-L-methionine + phosphate + diphosphate. It functions in the pathway amino-acid biosynthesis; S-adenosyl-L-methionine biosynthesis; S-adenosyl-L-methionine from L-methionine: step 1/1. Its function is as follows. Catalyzes the formation of S-adenosylmethionine from methionine and ATP. The reaction comprises two steps that are both catalyzed by the same enzyme: formation of S-adenosylmethionine (AdoMet) and triphosphate, and subsequent hydrolysis of the triphosphate. This chain is S-adenosylmethionine synthase 3 (SAM3), found in Solanum lycopersicum (Tomato).